Here is a 421-residue protein sequence, read N- to C-terminus: Tyrosine--tRNA ligase (421 aa).

Tyr35 serves as a coordination point for L-tyrosine. Residues 40–49 (PTADSLHIGH) carry the 'HIGH' region motif. Tyr170 and Gln174 together coordinate L-tyrosine. A 'KMSKS' region motif is present at residues 232 to 236 (KFGKT). Residue Lys235 participates in ATP binding. The S4 RNA-binding domain maps to 355 to 421 (LSLVDVLVES…GKKKYFLITY (67 aa)).

Belongs to the class-I aminoacyl-tRNA synthetase family. TyrS type 1 subfamily. In terms of assembly, homodimer.

It localises to the cytoplasm. The catalysed reaction is tRNA(Tyr) + L-tyrosine + ATP = L-tyrosyl-tRNA(Tyr) + AMP + diphosphate + H(+). Catalyzes the attachment of tyrosine to tRNA(Tyr) in a two-step reaction: tyrosine is first activated by ATP to form Tyr-AMP and then transferred to the acceptor end of tRNA(Tyr). The polypeptide is Tyrosine--tRNA ligase (Bacillus velezensis (strain DSM 23117 / BGSC 10A6 / LMG 26770 / FZB42) (Bacillus amyloliquefaciens subsp. plantarum)).